A 125-amino-acid chain; its full sequence is Snaclec coagulation factor IX/factor X-binding protein subunit B (125 aa).

The 122-residue stretch at 1 to 122 (DCSSGWTAYG…SLFGHFVCKS (122 aa)) folds into the C-type lectin domain. 3 cysteine pairs are disulfide-bonded: Cys2–Cys13, Cys30–Cys120, and Cys97–Cys112. Ca(2+)-binding residues include Ser41 and Glu47.

It belongs to the snaclec family. In terms of assembly, heterodimer of subunits A and B; disulfide-linked. Expressed by the venom gland.

Its subcellular location is the secreted. Its function is as follows. Anticoagulant protein which binds to coagulation factor IX (F9) and coagulation factor X (F10) in the presence of calcium. It may bind the gamma-carboxyglutamic acid-domain regions of factors with a 1 to 1 stoichiometry. The dissociation constant (K(d)) are 6.6 nM for factor IX (F9) and 125 nM for factor X (F10). Does not bind carbohydrates. This Echis carinatus (Saw-scaled viper) protein is Snaclec coagulation factor IX/factor X-binding protein subunit B.